The following is a 646-amino-acid chain: P-selectin (646 aa).

A signal peptide spans 1–41; that stretch reads MASCPKAIWNWRFQRAVFRTVQLLCFSVLIFEVINQKEVSA. Residues 42–587 are Extracellular-facing; it reads WTYHYSNKTY…QAGPLTIQET (546 aa). N-linked (GlcNAc...) asparagine glycans are attached at residues Asn48, Asn54, and Asn80. Residues 58-158 enclose the C-type lectin domain; it reads AFCQKYYTDL…PCWKRKRALC (101 aa). Intrachain disulfides connect Cys60-Cys158, Cys131-Cys150, Cys163-Cys174, Cys168-Cys183, Cys185-Cys194, Cys200-Cys244, Cys230-Cys257, Cys262-Cys306, Cys292-Cys319, Cys324-Cys368, Cys354-Cys381, Cys386-Cys430, Cys416-Cys443, Cys458-Cys502, Cys488-Cys515, Cys520-Cys564, and Cys550-Cys577. Residues Glu121, Asn123, and Asn124 each coordinate Ca(2+). Asn123 is a binding site for a carbohydrate. A carbohydrate contacts are provided by Glu133 and Asn146. Residues Asn146 and Asp147 each contribute to the Ca(2+) site. The EGF-like domain maps to 159-195; it reads YRASCQDMSCSKQGECIETIGNYTCSCYPGFYGPECE. Asn180 is a glycosylation site (N-linked (GlcNAc...) asparagine). Sushi domains lie at 198–259, 260–321, 322–383, 384–445, 456–517, and 518–579; these read RECG…QCVA, VQCP…VCKA, LQCQ…ECQA, VTCA…TCEE, VQCP…TCRA, and VKCA…TCQA. N-linked (GlcNAc...) asparagine glycosylation is found at Asn212 and Asn219. An N-linked (GlcNAc...) asparagine glycan is attached at Asn336. A glycan (N-linked (GlcNAc...) asparagine) is linked at Asn481. N-linked (GlcNAc...) asparagine glycans are attached at residues Asn532, Asn539, and Asn557. Residues 588 to 611 traverse the membrane as a helical segment; the sequence is LTYVGGAAAGTTGLVTGSILLALL. Over 612–646 the chain is Cytoplasmic; sequence RRRCRQKDDGKSPLNPQSHLGTYGVFTNAAFDPSP. Positions 634–637 match the Endocytosis signal motif; sequence YGVF. Residues 637 to 646 are interaction with SNX17; the sequence is FTNAAFDPSP.

It belongs to the selectin/LECAM family. In terms of assembly, interacts with SNX17. Interacts with SELPLG/PSGL1 and PODXL2 and mediates neutrophil adhesion and leukocyte rolling. This interaction requires the sialyl-Lewis X epitope of SELPLG and PODXL2, and specific tyrosine sulfation on SELPLG. Interacts (via C-type lectin domain) with alpha-IIb/beta3 integrin ITGA2B:ITGB3 and alpha-V/beta-3 integrin ITGAV:ITGB3. Interacts with alpha5/beta1 integrin ITGA5:ITGB1 and alpha4/beta1 integrin ITGA4:ITGB. As to expression, stored in the alpha-granules of platelets and Weibel-Palade bodies of endothelial cells. Upon cell activation by agonists, P-selectin is transported rapidly to the cell surface.

The protein localises to the cell membrane. Ca(2+)-dependent receptor for myeloid cells that binds to carbohydrates on neutrophils and monocytes. Mediates the interaction of activated endothelial cells or platelets with leukocytes. The ligand recognized is sialyl-Lewis X. Mediates rapid rolling of leukocyte rolling over vascular surfaces during the initial steps in inflammation through interaction with SELPLG. Mediates cell-cell interactions and cell adhesion via the interaction with integrin alpha-IIb/beta3 (ITGA2B:ITGB3) and integrin alpha-V/beta-3 (ITGAV:ITGB3). In Bos taurus (Bovine), this protein is P-selectin (SELP).